The sequence spans 890 residues: ATP-dependent DNA helicase DDX11 (890 aa).

One can recognise a Helicase ATP-binding domain in the interval 4–424; it reads KSGRFPFPFQ…KNLMYIKQIL (421 aa). Position 39-46 (39-46) interacts with ATP; that stretch reads SPTGTGKS. Positions 71–85 are enriched in basic and acidic residues; the sequence is LLEGQKDSDVVKEKN. Disordered stretches follow at residues 71-95 and 176-199; these read LLEG…EPDW and EYES…DDDD. [4Fe-4S] cluster-binding residues include C246, C264, C294, and C329. Positions 372 to 375 match the DEAH box motif; it reads DEAH.

It belongs to the DEAD box helicase family. DEAH subfamily. DDX11/CHL1 sub-subfamily. It depends on [4Fe-4S] cluster as a cofactor.

Its subcellular location is the nucleus. It is found in the nucleolus. The protein resides in the cytoplasm. It localises to the cytoskeleton. The protein localises to the spindle pole. Its subcellular location is the midbody. It is found in the microtubule organizing center. The protein resides in the centrosome. The catalysed reaction is Couples ATP hydrolysis with the unwinding of duplex DNA at the replication fork by translocating in the 5'-3' direction. This creates two antiparallel DNA single strands (ssDNA). The leading ssDNA polymer is the template for DNA polymerase III holoenzyme which synthesizes a continuous strand.. It carries out the reaction ATP + H2O = ADP + phosphate + H(+). Functionally, DNA-dependent ATPase and ATP-dependent DNA helicase that participates in various functions in genomic stability, including DNA replication, DNA repair and heterochromatin organization as well as in ribosomal RNA synthesis. Plays a role in DNA double-strand break (DSB) repair at the DNA replication fork during DNA replication recovery from DNA damage. Plays a role in the regulation of sister chromatid cohesion and mitotic chromosome segregation. Stimulates 5'-single-stranded DNA flap endonuclease activity of FEN1 in an ATP- and helicase-independent manner. Also plays a role in heterochromatin organization. Involved in rRNA transcription activation through binding to active hypomethylated rDNA gene loci by recruiting UBTF and the RNA polymerase Pol I transcriptional machinery. Plays a role in embryonic development. Associates with chromatin at DNA replication fork regions. Binds to single- and double-stranded DNAs. The protein is ATP-dependent DNA helicase DDX11 of Danio rerio (Zebrafish).